Reading from the N-terminus, the 165-residue chain is 2-C-methyl-D-erythritol 2,4-cyclodiphosphate synthase (165 aa).

Positions 13 and 15 each coordinate a divalent metal cation. Residues 13 to 15 (DRH) and 39 to 40 (HS) contribute to the 4-CDP-2-C-methyl-D-erythritol 2-phosphate site. Residue histidine 47 coordinates a divalent metal cation. 4-CDP-2-C-methyl-D-erythritol 2-phosphate contacts are provided by residues 61–63 (DIG) and phenylalanine 141.

This sequence belongs to the IspF family. As to quaternary structure, homotrimer. It depends on a divalent metal cation as a cofactor.

The catalysed reaction is 4-CDP-2-C-methyl-D-erythritol 2-phosphate = 2-C-methyl-D-erythritol 2,4-cyclic diphosphate + CMP. Its pathway is isoprenoid biosynthesis; isopentenyl diphosphate biosynthesis via DXP pathway; isopentenyl diphosphate from 1-deoxy-D-xylulose 5-phosphate: step 4/6. Functionally, involved in the biosynthesis of isopentenyl diphosphate (IPP) and dimethylallyl diphosphate (DMAPP), two major building blocks of isoprenoid compounds. Catalyzes the conversion of 4-diphosphocytidyl-2-C-methyl-D-erythritol 2-phosphate (CDP-ME2P) to 2-C-methyl-D-erythritol 2,4-cyclodiphosphate (ME-CPP) with a corresponding release of cytidine 5-monophosphate (CMP). This is 2-C-methyl-D-erythritol 2,4-cyclodiphosphate synthase from Thermotoga neapolitana (strain ATCC 49049 / DSM 4359 / NBRC 107923 / NS-E).